Here is a 463-residue protein sequence, read N- to C-terminus: Succinate--CoA ligase [ADP-forming] subunit beta, mitochondrial (463 aa).

The transit peptide at 1–52 directs the protein to the mitochondrion; sequence MAASMFYGRLVAVATLRNHRPRTAQRAAAQVLGSSGLFNNHGLQVQQQQQRN. Positions 61 to 288 constitute an ATP-grasp domain; it reads MELLQEAGVS…SNSAYRQKKI (228 aa). K78 carries the N6-acetyllysine modification. Y84 bears the Phosphotyrosine mark. K88 is subject to N6-acetyllysine; alternate. An N6-succinyllysine; alternate modification is found at K88. ATP is bound by residues K98 and 105-107; that span reads GRG. N6-acetyllysine is present on residues K129, K139, K143, and K216. Residues N258 and D272 each coordinate Mg(2+). S279 bears the Phosphoserine mark. N323 provides a ligand contact to substrate. T341 bears the Phosphothreonine mark. An N6-acetyllysine modification is found at K368. 380–382 contacts substrate; the sequence is GIM.

It belongs to the succinate/malate CoA ligase beta subunit family. ATP-specific subunit beta subfamily. As to quaternary structure, heterodimer of an alpha and a beta subunit. The beta subunit determines specificity for ATP. Interacts with ALAS2. Mg(2+) serves as cofactor. As to expression, widely expressed. Not expressed in liver and lung.

The protein localises to the mitochondrion. The enzyme catalyses succinate + ATP + CoA = succinyl-CoA + ADP + phosphate. Its pathway is carbohydrate metabolism; tricarboxylic acid cycle; succinate from succinyl-CoA (ligase route): step 1/1. With respect to regulation, inhibited by itaconate. Its function is as follows. ATP-specific succinyl-CoA synthetase functions in the citric acid cycle (TCA), coupling the hydrolysis of succinyl-CoA to the synthesis of ATP and thus represents the only step of substrate-level phosphorylation in the TCA. The beta subunit provides nucleotide specificity of the enzyme and binds the substrate succinate, while the binding sites for coenzyme A and phosphate are found in the alpha subunit. This Homo sapiens (Human) protein is Succinate--CoA ligase [ADP-forming] subunit beta, mitochondrial.